The chain runs to 318 residues: Protein IMPACT-A (318 aa).

The RWD domain occupies 14–116 (DEVEALTSIY…EKIREFLLGK (103 aa)). Positions 296–318 (EESSKQTAKSKKVGKECKKKADH) are disordered. A compositionally biased stretch (basic and acidic residues) spans 308–318 (VGKECKKKADH).

It belongs to the IMPACT family. As to quaternary structure, interacts with GCN1; prevents the interaction of GCN1 with EIF2AK4/GCN2 and inhibits EIF2AK4/GCN2 kinase activity. Interaction with RPL39; this interaction occurs in a GCN1-independent manner. Associates with ribosomes; this interaction occurs in a GCN1-independent manner. Associates with actin; this interaction occurs in a GCN1-independent manner.

The protein resides in the cytoplasm. In terms of biological role, translational regulator that ensures constant high levels of translation upon a variety of stress conditions, such as amino acid starvation, UV-C irradiation, proteasome inhibitor treatment and glucose deprivation. Plays a role as a negative regulator of the EIF2AK4/GCN2 kinase activity; impairs GCN1-mediated EIF2AK4/GCN2 activation, and hence EIF2AK4/GCN2-mediated eIF-2-alpha phosphorylation and subsequent down-regulation of protein synthesis. Plays a role in differentiation of neuronal cells by stimulating neurite outgrowth. The protein is Protein IMPACT-A (impact-A) of Xenopus tropicalis (Western clawed frog).